We begin with the raw amino-acid sequence, 61 residues long: Sperm protamine P1 (61 aa).

Residues 1–61 form a disordered region; that stretch reads MARYRHSRSR…RRYSRRRRRY (61 aa).

The protein belongs to the protamine P1 family. As to expression, testis.

It is found in the nucleus. The protein localises to the chromosome. Functionally, protamines substitute for histones in the chromatin of sperm during the haploid phase of spermatogenesis. They compact sperm DNA into a highly condensed, stable and inactive complex. The chain is Sperm protamine P1 (PRM1) from Macropus giganteus (Eastern gray kangaroo).